A 218-amino-acid chain; its full sequence is Thiopurine S-methyltransferase (218 aa).

Residues W10, L45, E66, and R123 each coordinate S-adenosyl-L-methionine.

The protein belongs to the class I-like SAM-binding methyltransferase superfamily. TPMT family.

The protein localises to the cytoplasm. It carries out the reaction S-adenosyl-L-methionine + a thiopurine = S-adenosyl-L-homocysteine + a thiopurine S-methylether.. This chain is Thiopurine S-methyltransferase, found in Pseudomonas paraeruginosa (strain DSM 24068 / PA7) (Pseudomonas aeruginosa (strain PA7)).